Consider the following 475-residue polypeptide: tRNA modification GTPase MnmE (475 aa).

Positions 24, 81, and 124 each coordinate (6S)-5-formyl-5,6,7,8-tetrahydrofolate. A TrmE-type G domain is found at 220-397 (GLSVVLAGQP…MRSELLRLIG (178 aa)). Asn-230 serves as a coordination point for K(+). Residues 230-235 (NVGKSS), 249-255 (TPIAGTT), 274-277 (DTAG), and 378-380 (SAR) contribute to the GTP site. Residue Ser-234 coordinates Mg(2+). Thr-249, Ile-251, and Thr-254 together coordinate K(+). Thr-255 is a Mg(2+) binding site. Lys-475 is a binding site for (6S)-5-formyl-5,6,7,8-tetrahydrofolate.

The protein belongs to the TRAFAC class TrmE-Era-EngA-EngB-Septin-like GTPase superfamily. TrmE GTPase family. As to quaternary structure, homodimer. Heterotetramer of two MnmE and two MnmG subunits. It depends on K(+) as a cofactor.

Its subcellular location is the cytoplasm. Its function is as follows. Exhibits a very high intrinsic GTPase hydrolysis rate. Involved in the addition of a carboxymethylaminomethyl (cmnm) group at the wobble position (U34) of certain tRNAs, forming tRNA-cmnm(5)s(2)U34. This Cupriavidus metallidurans (strain ATCC 43123 / DSM 2839 / NBRC 102507 / CH34) (Ralstonia metallidurans) protein is tRNA modification GTPase MnmE.